The sequence spans 405 residues: Prostaglandin E2 receptor EP1 subtype (405 aa).

Topologically, residues 1–39 (MSPCGLNLSLADEAATCATPRLPNTSVVLPTGDNGTSPA) are extracellular. Residues Asn-7, Asn-24, and Asn-34 are each glycosylated (N-linked (GlcNAc...) asparagine). Residues 40–62 (LPIFSMTLGAVSNVLALALLAQV) form a helical membrane-spanning segment. Over 63 to 80 (AGRMRRRRSAATFLLFVA) the chain is Cytoplasmic. A helical membrane pass occupies residues 81–99 (SLLAIDLAGHVIPGALVLR). At 100-113 (LYTAGRAPAGGACH) the chain is on the extracellular side. Cys-112 and Cys-190 are joined by a disulfide. A helical transmembrane segment spans residues 114–135 (FLGGCMVFFGLCPLLLGCGMAV). Over 136–157 (ERCVGVTQPLIHAARVSVARAR) the chain is Cytoplasmic. Residues 158-179 (LALAVLAAMALAVALLPLVHVG) form a helical membrane-spanning segment. Residues 180–202 (RYELQYPGTWCFISLGPRGGWRQ) lie on the Extracellular side of the membrane. Residues 203–228 (ALLAGLFAGLGLAALLAALVCNTLSG) form a helical membrane-spanning segment. The Cytoplasmic portion of the chain corresponds to 229 to 301 (LALLRARWRR…HAHDVEMVGQ (73 aa)). Residues 243 to 287 (RFRKTAGPDDRRRWGSRGPRLASASSASSITSATATLRSSRGGGS) form a disordered region. Over residues 262–282 (RLASASSASSITSATATLRSS) the composition is skewed to low complexity. Residues 302–323 (LVGIMVVSCICWSPLLVLVVLA) form a helical membrane-spanning segment. The Extracellular segment spans residues 324–337 (IGGWNSNSLQRPLF). The chain crosses the membrane as a helical span at residues 338–357 (LAVRLASWNQILDPWVYILL). The Cytoplasmic portion of the chain corresponds to 358-405 (RQAMLRQLLRLLPLRVSAKGGPTELGLTKSAWEASSLRSSRHSGFSHL).

The protein belongs to the G-protein coupled receptor 1 family. Phosphorylated. Abundant in kidney and in a lesser amount in lung.

The protein localises to the cell membrane. Receptor for prostaglandin E2 (PGE2). The activity of this receptor is mediated by G(q) proteins which activate a phosphatidylinositol-calcium second messenger system. May play a role as an important modulator of renal function. Implicated the smooth muscle contractile response to PGE2 in various tissues. The chain is Prostaglandin E2 receptor EP1 subtype (Ptger1) from Mus musculus (Mouse).